The sequence spans 448 residues: Phosphoglucosamine mutase (448 aa).

Ser-100 functions as the Phosphoserine intermediate in the catalytic mechanism. Mg(2+)-binding residues include Ser-100, Asp-240, Asp-242, and Asp-244. Phosphoserine is present on Ser-100.

The protein belongs to the phosphohexose mutase family. It depends on Mg(2+) as a cofactor. Post-translationally, activated by phosphorylation.

It catalyses the reaction alpha-D-glucosamine 1-phosphate = D-glucosamine 6-phosphate. Functionally, catalyzes the conversion of glucosamine-6-phosphate to glucosamine-1-phosphate. The sequence is that of Phosphoglucosamine mutase from Geobacillus thermodenitrificans (strain NG80-2).